Consider the following 999-residue polypeptide: Hypoxia up-regulated protein 1 (999 aa).

Positions 1 to 32 (MAATVRRQRPRRLLCWALVAVLLADLLALSDT) are cleaved as a signal peptide. Residues Asn155, Asn222, and Asn515 are each glycosylated (N-linked (GlcNAc...) asparagine). Residues 564-694 (VEDSPEEEST…KKQKPARKQK (131 aa)) form a disordered region. A Phosphoserine modification is found at Ser567. Positions 574–583 (LTKLGNTISS) are enriched in polar residues. An N-linked (GlcNAc...) asparagine glycan is attached at Asn596. Composition is skewed to basic and acidic residues over residues 611–626 (GSKDEPAEQGELKEEA) and 641–668 (PKGDAAREGETPDEKESGDKSEAQKPNE). N-linked (GlcNAc...) asparagine glycosylation is found at Asn830, Asn862, and Asn869. N6-acetyllysine is present on Lys883. The tract at residues 909-999 (AKFTKPRPRP…QKRPLKNDEL (91 aa)) is disordered. 2 N-linked (GlcNAc...) asparagine glycosylation sites follow: Asn922 and Asn931. A compositionally biased stretch (basic and acidic residues) spans 949–962 (EEAKAILEPDKEGL). A Prevents secretion from ER motif is present at residues 996 to 999 (NDEL).

This sequence belongs to the heat shock protein 70 family. Part of a large chaperone multiprotein complex comprising DNAJB11, HSP90B1, HSPA5, HYOU, PDIA2, PDIA4, PDIA6, PPIB, SDF2L1, UGGT1 and very small amounts of ERP29, but not, or at very low levels, CALR nor CANX. In terms of tissue distribution, selectively expressed by cultured astrocytes but not endothelial cells, microglia or neurons.

It is found in the endoplasmic reticulum lumen. Functionally, has a pivotal role in cytoprotective cellular mechanisms triggered by oxygen deprivation. Promotes HSPA5/BiP-mediated ATP nucleotide exchange and thereby activates the unfolded protein response (UPR) pathway in the presence of endoplasmic reticulum stress. May play a role as a molecular chaperone and participate in protein folding. The sequence is that of Hypoxia up-regulated protein 1 (Hyou1) from Rattus norvegicus (Rat).